Reading from the N-terminus, the 489-residue chain is UDP-N-acetylmuramate--L-alanine ligase (489 aa).

Residue 128–134 (GTHGKTT) participates in ATP binding.

It belongs to the MurCDEF family.

The protein resides in the cytoplasm. It carries out the reaction UDP-N-acetyl-alpha-D-muramate + L-alanine + ATP = UDP-N-acetyl-alpha-D-muramoyl-L-alanine + ADP + phosphate + H(+). The protein operates within cell wall biogenesis; peptidoglycan biosynthesis. In terms of biological role, cell wall formation. The polypeptide is UDP-N-acetylmuramate--L-alanine ligase (Shewanella woodyi (strain ATCC 51908 / MS32)).